The sequence spans 216 residues: Peptide methionine sulfoxide reductase MsrA (216 aa).

The active site involves cysteine 54.

This sequence belongs to the MsrA Met sulfoxide reductase family.

The catalysed reaction is L-methionyl-[protein] + [thioredoxin]-disulfide + H2O = L-methionyl-(S)-S-oxide-[protein] + [thioredoxin]-dithiol. It catalyses the reaction [thioredoxin]-disulfide + L-methionine + H2O = L-methionine (S)-S-oxide + [thioredoxin]-dithiol. Functionally, has an important function as a repair enzyme for proteins that have been inactivated by oxidation. Catalyzes the reversible oxidation-reduction of methionine sulfoxide in proteins to methionine. This is Peptide methionine sulfoxide reductase MsrA from Xylella fastidiosa (strain Temecula1 / ATCC 700964).